Consider the following 201-residue polypeptide: Small ribosomal subunit protein uS4c (201 aa).

The interval 20-44 (GLTNKKPRAGSDLRNQSRSGKKSQY) is disordered. In terms of domain architecture, S4 RNA-binding spans 89–150 (MRLDNILFRL…EQKSKALIQI (62 aa)).

It belongs to the universal ribosomal protein uS4 family. Part of the 30S ribosomal subunit. Contacts protein S5. The interaction surface between S4 and S5 is involved in control of translational fidelity.

The protein localises to the plastid. Its subcellular location is the chloroplast. In terms of biological role, one of the primary rRNA binding proteins, it binds directly to 16S rRNA where it nucleates assembly of the body of the 30S subunit. With S5 and S12 plays an important role in translational accuracy. This is Small ribosomal subunit protein uS4c (rps4) from Nicotiana tomentosiformis (Tobacco).